Reading from the N-terminus, the 271-residue chain is Ferric vulnibactin reductase VuuB (271 aa).

One can recognise an FAD-binding FR-type domain in the interval 8–131 (VYPMLLDFVR…IGPAGPDPLI (124 aa)).

It belongs to the SIP oxidoreductase family. As to quaternary structure, monomer. Requires FAD as cofactor.

It localises to the cytoplasm. The catalysed reaction is 2 a Fe(II)-siderophore + NAD(+) + H(+) = 2 a Fe(III)-siderophore + NADH. Its function is as follows. Ferric-siderophore reductase involved in iron removal from the siderophores after their transport into the cell. Acts as a major ferric-vulnibactin reductase catalyzing the reduction of Fe(3+)-vulnibactin, a catecholate siderophore synthesized by V.vulnificus. This is Ferric vulnibactin reductase VuuB from Vibrio vulnificus (strain CMCP6).